Here is a 306-residue protein sequence, read N- to C-terminus: Serine/threonine-protein kinase KIN28 (306 aa).

The 284-residue stretch at 7–290 folds into the Protein kinase domain; sequence YTKEKKVGEG…AVQCLESDYF (284 aa). Residues 13 to 21 and Lys36 each bind ATP; that span reads VGEGTYAVV. The active-site Proton acceptor is Asp129. Thr162 carries the post-translational modification Phosphothreonine; by CAK.

It belongs to the protein kinase superfamily. CMGC Ser/Thr protein kinase family. CDC2/CDKX subfamily. In terms of assembly, CCL1 and KIN28 form the TFIIK complex, a component of the TFIIH holo complex. Component of a complex consisting of KIN28, CCL1 and TFB3. Interacts with TFB3. Also interacts with HNT1 and HOG1. Post-translationally, phosphorylation of Thr-162 regulates the affinity of interaction between CCL1, KIN28 and TFB3. Thr-162 phosphorylation does not vary through the cell cycle and is necessary for full kinase activity.

It is found in the nucleus. The catalysed reaction is [DNA-directed RNA polymerase] + ATP = phospho-[DNA-directed RNA polymerase] + ADP + H(+). In terms of biological role, catalytic component of the TFIIK complex (KIN28-CCL1 dimer) which is the protein kinase component of transcription factor IIH (TFIIH) and phosphorylates the C-terminal domain of RNA polymerase II during transition from transcription to elongation after preinitiation complex (PIC) formation, thereby positively regulating transcription. TFIIH (or factor B) is essential for both basal and activated transcription, and is involved in nucleotide excision repair (NER) of damaged DNA. TFIIH has DNA-dependent ATPase activity and is essential for polymerase II transcription in vitro. Essential for cell proliferation. The chain is Serine/threonine-protein kinase KIN28 (KIN28) from Saccharomyces cerevisiae (strain ATCC 204508 / S288c) (Baker's yeast).